The primary structure comprises 422 residues: Histidine--tRNA ligase (422 aa).

This sequence belongs to the class-II aminoacyl-tRNA synthetase family. As to quaternary structure, homodimer.

Its subcellular location is the cytoplasm. It catalyses the reaction tRNA(His) + L-histidine + ATP = L-histidyl-tRNA(His) + AMP + diphosphate + H(+). In Vibrio campbellii (strain ATCC BAA-1116), this protein is Histidine--tRNA ligase.